A 157-amino-acid chain; its full sequence is Ribosomal RNA large subunit methyltransferase H (157 aa).

Residues Leu73, Gly104, and 123 to 128 (LGPLTL) contribute to the S-adenosyl-L-methionine site.

Belongs to the RNA methyltransferase RlmH family. As to quaternary structure, homodimer.

The protein resides in the cytoplasm. It catalyses the reaction pseudouridine(1915) in 23S rRNA + S-adenosyl-L-methionine = N(3)-methylpseudouridine(1915) in 23S rRNA + S-adenosyl-L-homocysteine + H(+). Specifically methylates the pseudouridine at position 1915 (m3Psi1915) in 23S rRNA. This chain is Ribosomal RNA large subunit methyltransferase H, found in Xylella fastidiosa (strain M12).